The primary structure comprises 333 residues: Ribosomal RNA large subunit methyltransferase F (333 aa).

Positions 1–10 (MPQPPKRPRK) are enriched in basic residues. The tract at residues 1–31 (MPQPPKRPRKPAPAAVKTAPAKGELHPRNRH) is disordered. A compositionally biased stretch (low complexity) spans 12-22 (APAAVKTAPAK).

It belongs to the methyltransferase superfamily. METTL16/RlmF family.

The protein resides in the cytoplasm. The enzyme catalyses adenosine(1618) in 23S rRNA + S-adenosyl-L-methionine = N(6)-methyladenosine(1618) in 23S rRNA + S-adenosyl-L-homocysteine + H(+). Functionally, specifically methylates the adenine in position 1618 of 23S rRNA. The sequence is that of Ribosomal RNA large subunit methyltransferase F from Ectopseudomonas mendocina (strain ymp) (Pseudomonas mendocina).